Here is a 519-residue protein sequence, read N- to C-terminus: Chloroethene reductive dehalogenase (519 aa).

Positions 1 to 43 (MSKFHKTISRRDFMKGLGLAGAGIGAVAASAPVFHDIDELVSS) form a signal peptide, tat-type signal. 4Fe-4S ferredoxin-type domains lie at 388–420 (PTPP…QEDE) and 435–465 (LGYR…LENA). Residues Cys400, Cys403, Cys406, Cys410, Cys444, Cys448, Cys451, and Cys455 each contribute to the [4Fe-4S] cluster site.

The protein belongs to the PceA family. It depends on [4Fe-4S] cluster as a cofactor. Corrinoid is required as a cofactor. Post-translationally, predicted to be exported by the Tat system. The position of the signal peptide cleavage has been experimentally proven.

Its subcellular location is the cell membrane. It catalyses the reaction chloroethene + AH2 = ethene + chloride + A + H(+). It carries out the reaction (Z)-1,2-dichloroethene + AH2 = chloroethene + chloride + A + H(+). The catalysed reaction is 1,1-dichloroethene + AH2 = chloroethene + chloride + A + H(+). Functionally, catalyzes the reductive dechlorination of chloroethene (or vinyl chloride, VC) to ethene. Can also reduce all dichloroethene (DCE) isomers, but not tetrachloroethene (PCE) or trichloroethene (TCE), at high rates. Reduced methyl viologen can act as the artificial electron donor. In Dehalococcoides mccartyi (strain VS), this protein is Chloroethene reductive dehalogenase.